A 144-amino-acid chain; its full sequence is Large ribosomal subunit protein uL16 (144 aa).

This sequence belongs to the universal ribosomal protein uL16 family. In terms of assembly, part of the 50S ribosomal subunit.

Binds 23S rRNA and is also seen to make contacts with the A and possibly P site tRNAs. This Listeria innocua serovar 6a (strain ATCC BAA-680 / CLIP 11262) protein is Large ribosomal subunit protein uL16.